Here is a 386-residue protein sequence, read N- to C-terminus: Inactive GDSL esterase/lipase-like protein 23 (386 aa).

The first 29 residues, 1–29 (MMAKNCNLVSVLCVFLVLTLFNKPITVAG), serve as a signal peptide directing secretion. The Nucleophile role is filled by S43. N-linked (GlcNAc...) asparagine glycans are attached at residues N105, N165, and N288. Catalysis depends on residues D322 and H325.

This sequence belongs to the 'GDSL' lipolytic enzyme family. Part of the PYK10 complex. Interacts with MVP1. Expressed mainly in roots.

The protein localises to the endoplasmic reticulum. In terms of biological role, involved in the control of the PYK10 complex size and possibly substrate specificity. May be exported from the endoplasmic reticulum upon interaction with MVP1. This chain is Inactive GDSL esterase/lipase-like protein 23 (GLL23), found in Arabidopsis thaliana (Mouse-ear cress).